The chain runs to 215 residues: uncharacterized protein (215 aa).

Transmembrane regions (helical) follow at residues 21–40 (IIKY…VLIN), 50–69 (LIFS…TIIF), 95–117 (FVAI…YVFF), 122–144 (LEIA…LVVL), 157–179 (NFVG…LILQ), and 185–207 (LIFI…SAYL).

This sequence belongs to the CcmB/CycW/HelB family.

It is found in the cell membrane. This is an uncharacterized protein from Rickettsia prowazekii (strain Madrid E).